The chain runs to 295 residues: Probable deoxyhypusine synthase (295 aa).

Lys-267 serves as the catalytic Nucleophile.

Belongs to the deoxyhypusine synthase family. NAD(+) is required as a cofactor.

It carries out the reaction [eIF5A protein]-L-lysine + spermidine = [eIF5A protein]-deoxyhypusine + propane-1,3-diamine. The protein operates within protein modification; eIF5A hypusination. Catalyzes the NAD-dependent oxidative cleavage of spermidine and the subsequent transfer of the butylamine moiety of spermidine to the epsilon-amino group of a specific lysine residue of the eIF-5A precursor protein to form the intermediate deoxyhypusine residue. The sequence is that of Probable deoxyhypusine synthase from Pyrobaculum calidifontis (strain DSM 21063 / JCM 11548 / VA1).